A 90-amino-acid polypeptide reads, in one-letter code: Small ribosomal subunit protein uS17m (90 aa).

Belongs to the universal ribosomal protein uS17 family. As to quaternary structure, component of the mitochondrial small ribosomal subunit (mt-SSU). Mature yeast 74S mitochondrial ribosomes consist of a small (37S) and a large (54S) subunit. The 37S small subunit contains a 15S ribosomal RNA (15S mt-rRNA) and at least 32 different proteins. The 54S large subunit contains a 21S rRNA (21S mt-rRNA) and at least 45 different proteins.

It is found in the mitochondrion. In terms of biological role, component of the mitochondrial ribosome (mitoribosome), a dedicated translation machinery responsible for the synthesis of mitochondrial genome-encoded proteins, including at least some of the essential transmembrane subunits of the mitochondrial respiratory chain. The mitoribosomes are attached to the mitochondrial inner membrane and translation products are cotranslationally integrated into the membrane. uS17m may have a meiosis-specific role as it accumulates during the middle stage of sporulation. This chain is Small ribosomal subunit protein uS17m, found in Schizosaccharomyces pombe (strain 972 / ATCC 24843) (Fission yeast).